A 497-amino-acid polypeptide reads, in one-letter code: Delayed-rectifier potassium channel regulatory subunit KCNS1 (497 aa).

Over 1-186 (MVSEFPGPGS…LTMENPGYSL (186 aa)) the chain is Cytoplasmic. Residues 187 to 208 (PSKLFSCVSIGVVLASIAAMCI) traverse the membrane as a helical segment. The Extracellular portion of the chain corresponds to 209–239 (HSLPEYQAREAAAAVAAVAAGRSAEEVRDDP). A helical transmembrane segment spans residues 240–262 (VLRRLEYFCIAWFSFEVSSRLLL). Residues 263 to 273 (APSTRNFFCHP) are Cytoplasmic-facing. A helical membrane pass occupies residues 274–291 (LNLIDIVSVLPFYLTLLA). At 292 to 309 (GAALGDQRGASGEELGDL) the chain is on the extracellular side. The helical; Voltage-sensor transmembrane segment at 310 to 330 (GKVVQVFRLMRIFRVLKLARH) threads the bilayer. The Cytoplasmic portion of the chain corresponds to 331–345 (STGLRSLGATLKHSY). A helical transmembrane segment spans residues 346–367 (REVGILLLYLAVGVSVFSGVAY). Over 368–379 (TAEEENEGFHTI) the chain is Extracellular. Positions 380-391 (PACWWWGTVSMT) form an intramembrane region, helical. Residues 392-397 (TVGYGD) carry the Selectivity filter motif. Residues 392-399 (TVGYGDVV) lie within the membrane without spanning it. Residues 400–406 (PETVGGK) lie on the Extracellular side of the membrane. Residues 407–435 (LAASGCILGGILVVALPITIIFNKFSHFY) form a helical membrane-spanning segment. At 436-497 (RRQKALEAAV…PREPAKSHSY (62 aa)) the chain is on the cytoplasmic side. The disordered stretch occupies residues 464–497 (SDVSLETSRDTSQEGRSTDLETQAPREPAKSHSY). Residues 470–482 (TSRDTSQEGRSTD) are compositionally biased toward basic and acidic residues.

It belongs to the potassium channel family. S (TC 1.A.1.2) subfamily. Kv9.1/KCNS1 sub-subfamily. As to quaternary structure, heterotetramer with KCNB1 and KCNB2. Does not form homomultimers. In terms of tissue distribution, detected in brain, but not in the other tissues tested. The highest levels of expression are in olfactory bulb, cerebral cortex, hippocampus, habenula, basolateral amygdaloid nuclei and cerebellum.

The protein resides in the cell membrane. Functionally, potassium channel regulatory subunit that modulate the delayed rectifier voltage-gated potassium channel activity of KCNB1 and KCNB2 by altering their kinetics, expression levels, and shifting the half-inactivation potential to more polarized values. While it does not form functional channels on its own, it can form functional heterotetrameric channels with KCNB1 and KCNB2. Each regulatory subunit has unique regulatory properties that can lead to extensive inhibition, significant changes in kinetics, and/or substantial shifts in the voltage dependencies of the inactivation process. The protein is Delayed-rectifier potassium channel regulatory subunit KCNS1 of Mus musculus (Mouse).